The following is a 219-amino-acid chain: Probable nicotinate-nucleotide adenylyltransferase (219 aa).

It belongs to the NadD family.

It catalyses the reaction nicotinate beta-D-ribonucleotide + ATP + H(+) = deamido-NAD(+) + diphosphate. It functions in the pathway cofactor biosynthesis; NAD(+) biosynthesis; deamido-NAD(+) from nicotinate D-ribonucleotide: step 1/1. Catalyzes the reversible adenylation of nicotinate mononucleotide (NaMN) to nicotinic acid adenine dinucleotide (NaAD). The sequence is that of Probable nicotinate-nucleotide adenylyltransferase from Herminiimonas arsenicoxydans.